A 471-amino-acid polypeptide reads, in one-letter code: Probable ribonuclease FAU-1 (471 aa).

In terms of domain architecture, S1 motif spans 93-139; it reads GAVFDAAVDHTVGGGAILDLGDDREAYLPFGAVDDHVTDGDTLRVAI.

This sequence belongs to the FAU-1 family.

Its function is as follows. Probable RNase involved in rRNA stability through maturation and/or degradation of precursor rRNAs. Binds to RNA in loop regions with AU-rich sequences. This is Probable ribonuclease FAU-1 from Halobacterium salinarum (strain ATCC 29341 / DSM 671 / R1).